The sequence spans 77 residues: Acyl carrier protein (77 aa).

The Carrier domain occupies 2–77; sequence ADVMERVTKI…DVVDYINNNQ (76 aa). Serine 37 bears the O-(pantetheine 4'-phosphoryl)serine mark.

The protein belongs to the acyl carrier protein (ACP) family. 4'-phosphopantetheine is transferred from CoA to a specific serine of apo-ACP by AcpS. This modification is essential for activity because fatty acids are bound in thioester linkage to the sulfhydryl of the prosthetic group.

Its subcellular location is the cytoplasm. It functions in the pathway lipid metabolism; fatty acid biosynthesis. Carrier of the growing fatty acid chain in fatty acid biosynthesis. The chain is Acyl carrier protein from Shouchella clausii (strain KSM-K16) (Alkalihalobacillus clausii).